A 205-amino-acid chain; its full sequence is Small ribosomal subunit protein uS4 (205 aa).

A disordered region spans residues G21–D47. The S4 RNA-binding domain occupies R94 to D154.

It belongs to the universal ribosomal protein uS4 family. As to quaternary structure, part of the 30S ribosomal subunit. Contacts protein S5. The interaction surface between S4 and S5 is involved in control of translational fidelity.

In terms of biological role, one of the primary rRNA binding proteins, it binds directly to 16S rRNA where it nucleates assembly of the body of the 30S subunit. Functionally, with S5 and S12 plays an important role in translational accuracy. This Pelagibacter ubique (strain HTCC1062) protein is Small ribosomal subunit protein uS4.